A 326-amino-acid polypeptide reads, in one-letter code: Peroxidase 3 (326 aa).

The signal sequence occupies residues 1–24; that stretch reads MNCLIAIALSVSFFLVGIVGPIQA. Cystine bridges form between cysteine 35-cysteine 113, cysteine 68-cysteine 73, cysteine 119-cysteine 321, and cysteine 198-cysteine 231. Catalysis depends on histidine 66, which acts as the Proton acceptor. 5 residues coordinate Ca(2+): aspartate 67, valine 70, glycine 72, aspartate 74, and serine 76. N-linked (GlcNAc...) asparagine glycans are attached at residues asparagine 80 and asparagine 138. Proline 161 provides a ligand contact to substrate. Residue asparagine 166 is glycosylated (N-linked (GlcNAc...) asparagine). A heme b-binding site is contributed by histidine 191. A Ca(2+)-binding site is contributed by threonine 192. Residues asparagine 207 and asparagine 237 are each glycosylated (N-linked (GlcNAc...) asparagine). Ca(2+) is bound by residues aspartate 244, serine 247, and aspartate 252.

The protein belongs to the peroxidase family. Classical plant (class III) peroxidase subfamily. Heme b is required as a cofactor. Ca(2+) serves as cofactor. In terms of tissue distribution, expressed in root cells.

Its subcellular location is the secreted. The enzyme catalyses 2 a phenolic donor + H2O2 = 2 a phenolic radical donor + 2 H2O. Functionally, removal of H(2)O(2), oxidation of toxic reductants, biosynthesis and degradation of lignin, suberization, auxin catabolism, response to environmental stresses such as wounding, pathogen attack and oxidative stress. These functions might be dependent on each isozyme/isoform in each plant tissue. The protein is Peroxidase 3 (PER3) of Arabidopsis thaliana (Mouse-ear cress).